The primary structure comprises 244 residues: Tegument protein UL51 (244 aa).

Cysteine 9 carries the S-palmitoyl cysteine; by host lipid modification. The disordered stretch occupies residues 175 to 244 (TAGLGATEAP…SSTEAPLLLA (70 aa)). Residues 210-220 (RPGPVPPADPT) are compositionally biased toward pro residues.

This sequence belongs to the herpesviridae UL51 family. Oligomerizes. Interacts with UL7; this interaction mediates UL7 incorporation to virions. Phosphorylated. In terms of processing, palmitoylation is necessary for Golgi localization.

The protein localises to the virion tegument. It localises to the host cytoplasm. Its subcellular location is the host Golgi apparatus. In terms of biological role, plays several roles during the time course of infection, including egress of virus particles from the perinuclear space and secondary envelopment of cytoplasmic capsids that bud into specific trans-Golgi network (TGN)-derived membranes. This Human herpesvirus 2 (strain HG52) (HHV-2) protein is Tegument protein UL51.